Reading from the N-terminus, the 228-residue chain is Methyltransferase verB (228 aa).

This sequence belongs to the methyltransferase superfamily.

It participates in secondary metabolite biosynthesis; terpenoid biosynthesis. The protein operates within mycotoxin biosynthesis. Its function is as follows. Methyltransferase; part of the gene cluster that mediates the biosynthesis of the neurotoxin verrucosidin, a methylated alpha-pyrone polyketide that inhibits oxidative phosphorylation in mitochondria and thereby causes neurological diseases. The carbon backbone of verrucosidin is synthesized by the HR-PKS verA, and further modified by the other verrucodidin cluster enzymes. The polypeptide is Methyltransferase verB (Penicillium polonicum).